A 546-amino-acid chain; its full sequence is 2-isopropylmalate synthase (546 aa).

The Pyruvate carboxyltransferase domain maps to 8 to 271; that stretch reads ILIFDTTLRD…NSFFGRSSDS (264 aa). Mn(2+) contacts are provided by D17, H208, H210, and N244. Residues 408–546 are regulatory domain; sequence QLSHVQVSCG…KNKVLSNPKK (139 aa).

Belongs to the alpha-IPM synthase/homocitrate synthase family. LeuA type 1 subfamily. Homodimer. Requires Mn(2+) as cofactor.

Its subcellular location is the cytoplasm. The catalysed reaction is 3-methyl-2-oxobutanoate + acetyl-CoA + H2O = (2S)-2-isopropylmalate + CoA + H(+). The protein operates within amino-acid biosynthesis; L-leucine biosynthesis; L-leucine from 3-methyl-2-oxobutanoate: step 1/4. Its function is as follows. Catalyzes the condensation of the acetyl group of acetyl-CoA with 3-methyl-2-oxobutanoate (2-ketoisovalerate) to form 3-carboxy-3-hydroxy-4-methylpentanoate (2-isopropylmalate). This is 2-isopropylmalate synthase from Prochlorococcus marinus subsp. pastoris (strain CCMP1986 / NIES-2087 / MED4).